Here is a 49-residue protein sequence, read N- to C-terminus: Large ribosomal subunit protein bL33B (49 aa).

The protein belongs to the bacterial ribosomal protein bL33 family.

The protein is Large ribosomal subunit protein bL33B (rpmG2) of Staphylococcus epidermidis (strain ATCC 12228 / FDA PCI 1200).